A 101-amino-acid chain; its full sequence is Apolipoprotein C-II (101 aa).

The N-terminal stretch at 1–22 (MGTRFLLALCLVLLVLGFEVQG) is a signal peptide. The segment at 66-74 (AVDEKLRDL) is lipid binding. The segment at 78 to 101 (STAAMSTYTGIFTDQVLSVLKGEE) is lipoprotein lipase cofactor.

Belongs to the apolipoprotein C2 family. In terms of processing, proapolipoprotein C-II is synthesized as a sialic acid containing glycoprotein which is subsequently desialylated prior to its proteolytic processing. Proapolipoprotein C-II, the major form found in plasma undergoes proteolytic cleavage of its N-terminal hexapeptide to generate apolipoprotein C-II, which occurs as the minor form in plasma.

Its subcellular location is the secreted. Its function is as follows. Component of chylomicrons, very low-density lipoproteins (VLDL), low-density lipoproteins (LDL), and high-density lipoproteins (HDL) in plasma. Plays an important role in lipoprotein metabolism as an activator of lipoprotein lipase. Both proapolipoprotein C-II and apolipoprotein C-II can activate lipoprotein lipase. The protein is Apolipoprotein C-II (APOC2) of Colobus guereza (Mantled guereza).